The sequence spans 73 residues: Conotoxin Lt9a (73 aa).

The N-terminal stretch at 1 to 23 (MTLTKSAVLILVLLLAFDNFADV) is a signal peptide. Residues 24 to 40 (QPGLITMGGGRLSNLLS) constitute a propeptide that is removed on maturation. 3 disulfides stabilise this stretch: cysteine 48-cysteine 62, cysteine 53-cysteine 64, and cysteine 59-cysteine 69.

This sequence belongs to the conotoxin P superfamily. Expressed by the venom duct.

The protein resides in the secreted. Functionally, probable neurotoxin that inhibits ion channels. The sequence is that of Conotoxin Lt9a from Conus litteratus (Lettered cone).